We begin with the raw amino-acid sequence, 94 residues long: Large ribosomal subunit protein bL27 (94 aa).

The propeptide occupies 1–9; the sequence is MLKLNLQFF. Residues 12 to 32 form a disordered region; that stretch reads KKGVSSTKNGRDSESKRLGAK. The span at 20–32 shows a compositional bias: basic and acidic residues; that stretch reads NGRDSESKRLGAK.

This sequence belongs to the bacterial ribosomal protein bL27 family. Post-translationally, the N-terminus is cleaved by ribosomal processing cysteine protease Prp.

In Staphylococcus carnosus (strain TM300), this protein is Large ribosomal subunit protein bL27.